We begin with the raw amino-acid sequence, 373 residues long: Erythronate-4-phosphate dehydrogenase (373 aa).

2 residues coordinate substrate: Ser-45 and Thr-66. Asp-146 and Thr-175 together coordinate NAD(+). Arg-208 is a catalytic residue. Asp-232 provides a ligand contact to NAD(+). Glu-237 is a catalytic residue. His-254 serves as the catalytic Proton donor. Gly-257 provides a ligand contact to NAD(+). Tyr-258 serves as a coordination point for substrate.

Belongs to the D-isomer specific 2-hydroxyacid dehydrogenase family. PdxB subfamily. In terms of assembly, homodimer.

It localises to the cytoplasm. It carries out the reaction 4-phospho-D-erythronate + NAD(+) = (R)-3-hydroxy-2-oxo-4-phosphooxybutanoate + NADH + H(+). It participates in cofactor biosynthesis; pyridoxine 5'-phosphate biosynthesis; pyridoxine 5'-phosphate from D-erythrose 4-phosphate: step 2/5. Functionally, catalyzes the oxidation of erythronate-4-phosphate to 3-hydroxy-2-oxo-4-phosphonooxybutanoate. The polypeptide is Erythronate-4-phosphate dehydrogenase (Serratia proteamaculans (strain 568)).